Consider the following 247-residue polypeptide: Membrane-spanning 4-domains subfamily A member 6D (247 aa).

The Cytoplasmic segment spans residues 1 to 46 (MIPQVVTSETVTVISPNGISFPQTDKPQPSHQSQDSLKKHLKAEIK). A helical membrane pass occupies residues 47–67 (VMAAIQIMCAVMVLSLGIILA). Topologically, residues 68 to 80 (SVPSNLHFTSVFS) are extracellular. The helical transmembrane segment at 81–101 (ILLESGYPFVGALFFAISGIL) threads the bilayer. At 102–121 (SIVTEKKMTKPLVHSSLALS) the chain is on the cytoplasmic side. Residues 122–142 (ILSVLSALTGIAILSVSLAAL) traverse the membrane as a helical segment. The Extracellular portion of the chain corresponds to 143-180 (EPALQQCKLAFTQLDTTQDAYHFFSPEPLNSCFVAKAA). A helical transmembrane segment spans residues 181 to 201 (LTGVFSLMLISSVLELGLAVL). At 202-247 (TATLWWKQSSSAFSGNVIFLSQNSKNKSSVSSESLCNPTYENILTS) the chain is on the cytoplasmic side. S235 is modified (phosphoserine).

It belongs to the MS4A family. In terms of tissue distribution, expressed in thymus, spleen, intestine, colon, testis, heart, liver, brain, kidney, peripheral lymph node and bone marrow.

It is found in the membrane. Its function is as follows. May be involved in signal transduction as a component of a multimeric receptor complex. In Mus musculus (Mouse), this protein is Membrane-spanning 4-domains subfamily A member 6D (Ms4a6d).